Reading from the N-terminus, the 813-residue chain is Nuclear cap-binding protein subunit 1 (813 aa).

In terms of domain architecture, MIF4G spans 31-243; that stretch reads EERLETLILR…CLWAQIRKLR (213 aa). Residues 667–716 are disordered; that stretch reads KERLDRNAESSSSESEEETAPAGTDAVTPQRRRKKPIGDNADKPTEEQVE. The span at 702–716 shows a compositional bias: basic and acidic residues; it reads PIGDNADKPTEEQVE.

The protein belongs to the NCBP1 family. As to quaternary structure, component of the nuclear cap-binding complex (CBC), a heterodimer composed of Cbp80 and Cbp20 that interacts with m7GpppG-capped RNA.

It localises to the nucleus. Component of the cap-binding complex (CBC), which binds cotranscriptionally to the 5'-cap of pre-mRNAs and is involved in various processes such as pre-mRNA splicing and RNA-mediated gene silencing (RNAi). The CBC complex is involved in miRNA-mediated RNA interference and is required for primary microRNAs (miRNAs) processing. Also involved in innate immunity via the short interfering RNAs (siRNAs) processing machinery by restricting the viral RNA production. In the CBC complex, Cbp80 does not bind directly capped RNAs (m7GpppG-capped RNA) but is required to stabilize the movement of the N-terminal loop of Cbp20 and lock the CBC into a high affinity cap-binding state with the cap structure. The polypeptide is Nuclear cap-binding protein subunit 1 (Cbp80) (Aedes aegypti (Yellowfever mosquito)).